The chain runs to 48 residues: uncharacterized protein (48 aa).

The protein belongs to the ELIP/psbS family.

The protein resides in the plastid. It is found in the chloroplast. Possible role in chlorophyll and/or carotenoid binding. This is an uncharacterized protein from Porphyra purpurea (Red seaweed).